The primary structure comprises 71 residues: Large ribosomal subunit protein bL31 (71 aa).

Residues Cys16, Cys18, Cys37, and Cys40 each contribute to the Zn(2+) site.

Belongs to the bacterial ribosomal protein bL31 family. Type A subfamily. Part of the 50S ribosomal subunit. Zn(2+) serves as cofactor.

In terms of biological role, binds the 23S rRNA. The chain is Large ribosomal subunit protein bL31 from Wigglesworthia glossinidia brevipalpis.